The chain runs to 1013 residues: Adhesion G-protein coupled receptor G2 (1013 aa).

A signal peptide spans 1–37 (MLFSGGQYSPVGRPEEVLLIYKIFLVIICFHAILVTS). Topologically, residues 38–623 (LKENAGNSSL…TSLPPSQMMA (586 aa)) are extracellular. N-linked (GlcNAc...) asparagine glycans are attached at residues Asn-44, Asn-78, Asn-92, Asn-104, Asn-128, Asn-137, Asn-155, Asn-179, Asn-187, Asn-366, Asn-431, Asn-452, Asn-457, Asn-524, Asn-538, Asn-543, Asn-547, and Asn-593. The GAIN-B domain maps to 457–615 (NTTTFAAQDP…GILLDLSRTS (159 aa)). 2 disulfide bridges follow: Cys-566/Cys-597 and Cys-585/Cys-599. The interval 566–615 (CVFWDLNRNGGRGGWSSDGCSVKEKRMNETICTCSHLTSFGILLDLSRTS) is GPS. Residues 604-615 (SFGILLDLSRTS) form a stachel region. The helical transmembrane segment at 624–644 (LTFITYIGCGLSSIFLSVTLV) threads the bilayer. Residues 645 to 663 (TYIAFEKIRRDYPSKILIQ) lie on the Cytoplasmic side of the membrane. A helical membrane pass occupies residues 664 to 684 (LCAALLLLNLVFLLDSWIALY). At 685–688 (NARG) the chain is on the extracellular side. Residues 689–709 (FCISVAVFLHYFLLVSFTWMG) traverse the membrane as a helical segment. A disulfide bridge links Cys-690 with Cys-774. Residues 710–733 (LEAFHMYLALVKVFNTYIRKYILK) lie on the Cytoplasmic side of the membrane. A helical membrane pass occupies residues 734–754 (FCIVGWGIPAVVVSIVLTISP). The Extracellular segment spans residues 755–785 (DNYGIGSYGKFPNGTPDDFCWINSSVVFYIT). An N-linked (GlcNAc...) asparagine glycan is attached at Asn-777. A helical membrane pass occupies residues 786-806 (VVGYFCVIFLLNVSMFIVVLV). Residues 807–830 (QLCRIKKKKQLGAQRKTSIQDLRS) lie on the Cytoplasmic side of the membrane. The helical transmembrane segment at 831 to 851 (IAGLTFLLGITWGFAFFAWGP) threads the bilayer. Topologically, residues 852 to 853 (VN) are extracellular. A glycan (N-linked (GlcNAc...) asparagine) is linked at Asn-853. The helical transmembrane segment at 854–874 (LTFMYLFAIFNTLQGFFIFIF) threads the bilayer. Position 864 (Asn-864) interacts with 3beta-hydroxyandrost-5-en-17-one. The Cytoplasmic portion of the chain corresponds to 875-1013 (YCAAKENVRK…RGSLHFIEQM (139 aa)). At Ser-1006 the chain carries Phosphoserine.

It belongs to the G-protein coupled receptor 2 family. Adhesion G-protein coupled receptor (ADGR) subfamily. Heterodimer of 2 chains generated by proteolytic processing; the large extracellular N-terminal fragment and the membrane-bound C-terminal fragment predominantly remain associated and non-covalently linked. Interacts with CFTR. Post-translationally, proteolytically cleaved into 2 subunits, an extracellular subunit and a seven-transmembrane subunit. Highly glycosylated. In terms of tissue distribution, epididymis-specific expression (at protein level). Associated with apical membranes of efferent ductule and proximal epididymal duct epithelia.

The protein resides in the apical cell membrane. Forms a heterodimer of 2 chains generated by proteolytic processing that remain associated through non-covalent interactions mediated by the GAIN-B domain. In the inactivated receptor, the Stachel sequence (also named stalk) is embedded in the GAIN-B domain, where it adopts a beta-strand conformation. On activation, the Stachel moves into the 7 transmembrane region and adopts a twisted hook-shaped configuration that forms contacts within the receptor, leading to coupling of a G-alpha protein, which activates signaling. The cleaved GAIN-B and N-terminal domains can then dissociate from the rest of the receptor. Deoxycorticosterone (DOC) acts as an antagonist of ADGRG2. In terms of biological role, adhesion G-protein coupled receptor (aGPCR) for steroid hormones, such as dehydroepiandrosterone (DHEA; also named 3beta-hydroxyandrost-5-en-17-one) and androstenedione. Involved in a signal transduction pathway controlling epididymal function and male fertility. Ligand binding causes a conformation change that triggers signaling via guanine nucleotide-binding proteins (G proteins) and modulates the activity of downstream effectors, such as adenylate cyclase. ADGRG2 is coupled to G(s) G proteins and mediates activation of adenylate cyclase activity. Also able to couple with G(q) G proteins in vitro. May regulate fluid exchange within epididymis. This Rattus norvegicus (Rat) protein is Adhesion G-protein coupled receptor G2.